We begin with the raw amino-acid sequence, 178 residues long: uncharacterized protein (178 aa).

A disordered region spans residues 1 to 89 (MSAKEGSSHP…GEKKGKTEKL (89 aa)). Composition is skewed to basic and acidic residues over residues 44 to 53 (PYQKNEKVVV) and 61 to 89 (AFLH…TEKL).

This is an uncharacterized protein from Schizosaccharomyces pombe (strain 972 / ATCC 24843) (Fission yeast).